Consider the following 171-residue polypeptide: Siroheme decarboxylase NirH subunit (171 aa).

This sequence belongs to the Ahb/Nir family. Probably forms a complex composed of NirD, NirL, NirG and NirH. All proteins are required for the total conversion of siroheme to didecarboxysiroheme.

It carries out the reaction siroheme + 2 H(+) = 12,18-didecarboxysiroheme + 2 CO2. It functions in the pathway porphyrin-containing compound metabolism. In terms of biological role, involved in heme d1 biosynthesis. Catalyzes the decarboxylation of siroheme into didecarboxysiroheme. The sequence is that of Siroheme decarboxylase NirH subunit from Pseudomonas aeruginosa (strain ATCC 15692 / DSM 22644 / CIP 104116 / JCM 14847 / LMG 12228 / 1C / PRS 101 / PAO1).